The chain runs to 211 residues: Uracil phosphoribosyltransferase (211 aa).

30-34 (KGLVR) lines the GTP pocket. Residues Arg79, Arg104, and 133–141 (DPMLATGTT) contribute to the 5-phospho-alpha-D-ribose 1-diphosphate site. Uracil is bound by residues Ile197 and 202 to 204 (GDA). A 5-phospho-alpha-D-ribose 1-diphosphate-binding site is contributed by Asp203.

The protein belongs to the UPRTase family. Mg(2+) serves as cofactor.

The enzyme catalyses UMP + diphosphate = 5-phospho-alpha-D-ribose 1-diphosphate + uracil. Its pathway is pyrimidine metabolism; UMP biosynthesis via salvage pathway; UMP from uracil: step 1/1. Allosterically activated by GTP. Its function is as follows. Catalyzes the conversion of uracil and 5-phospho-alpha-D-ribose 1-diphosphate (PRPP) to UMP and diphosphate. The polypeptide is Uracil phosphoribosyltransferase (Pyrobaculum arsenaticum (strain DSM 13514 / JCM 11321 / PZ6)).